We begin with the raw amino-acid sequence, 299 residues long: Oxygen-dependent coproporphyrinogen-III oxidase (299 aa).

Ser92 is a substrate binding site. Residues His96 and His106 each contribute to the a divalent metal cation site. The active-site Proton donor is His106. Residue 108 to 110 (NVR) coordinates substrate. Residues His145 and His175 each coordinate a divalent metal cation. The tract at residues 240–275 (YVEFNLVWDRGTLFGLQTGGRTESILMSMPPLVRWE) is important for dimerization. 258-260 (GGR) is a binding site for substrate.

Belongs to the aerobic coproporphyrinogen-III oxidase family. In terms of assembly, homodimer. Requires a divalent metal cation as cofactor.

The protein resides in the cytoplasm. The catalysed reaction is coproporphyrinogen III + O2 + 2 H(+) = protoporphyrinogen IX + 2 CO2 + 2 H2O. Its pathway is porphyrin-containing compound metabolism; protoporphyrin-IX biosynthesis; protoporphyrinogen-IX from coproporphyrinogen-III (O2 route): step 1/1. Its function is as follows. Involved in the heme biosynthesis. Catalyzes the aerobic oxidative decarboxylation of propionate groups of rings A and B of coproporphyrinogen-III to yield the vinyl groups in protoporphyrinogen-IX. This is Oxygen-dependent coproporphyrinogen-III oxidase from Salmonella enteritidis PT4 (strain P125109).